The primary structure comprises 282 residues: Acetylglutamate kinase (282 aa).

Substrate is bound by residues 62–63 (GG), R84, and N178.

Belongs to the acetylglutamate kinase family. ArgB subfamily.

It localises to the cytoplasm. It catalyses the reaction N-acetyl-L-glutamate + ATP = N-acetyl-L-glutamyl 5-phosphate + ADP. It participates in amino-acid biosynthesis; L-arginine biosynthesis; N(2)-acetyl-L-ornithine from L-glutamate: step 2/4. Its function is as follows. Catalyzes the ATP-dependent phosphorylation of N-acetyl-L-glutamate. This Kosmotoga olearia (strain ATCC BAA-1733 / DSM 21960 / TBF 19.5.1) protein is Acetylglutamate kinase.